A 122-amino-acid chain; its full sequence is Large ribosomal subunit protein uL14 (122 aa).

It belongs to the universal ribosomal protein uL14 family. As to quaternary structure, part of the 50S ribosomal subunit. Forms a cluster with proteins L3 and L19. In the 70S ribosome, L14 and L19 interact and together make contacts with the 16S rRNA in bridges B5 and B8.

Binds to 23S rRNA. Forms part of two intersubunit bridges in the 70S ribosome. The sequence is that of Large ribosomal subunit protein uL14 from Lactobacillus gasseri (strain ATCC 33323 / DSM 20243 / BCRC 14619 / CIP 102991 / JCM 1131 / KCTC 3163 / NCIMB 11718 / NCTC 13722 / AM63).